Consider the following 246-residue polypeptide: Lipoprotein-releasing system ATP-binding protein LolD 1 (246 aa).

Residues 6–244 enclose the ABC transporter domain; it reads LKLERIRKDL…ASVTNEAASL (239 aa). Position 43-50 (43-50) interacts with ATP; the sequence is GPSGSGKS.

It belongs to the ABC transporter superfamily. Lipoprotein translocase (TC 3.A.1.125) family. As to quaternary structure, the complex is composed of two ATP-binding proteins (LolD) and two transmembrane proteins (LolC and LolE).

It localises to the cell inner membrane. Functionally, part of the ABC transporter complex LolCDE involved in the translocation of mature outer membrane-directed lipoproteins, from the inner membrane to the periplasmic chaperone, LolA. Responsible for the formation of the LolA-lipoprotein complex in an ATP-dependent manner. This is Lipoprotein-releasing system ATP-binding protein LolD 1 from Chlorobium chlorochromatii (strain CaD3).